The sequence spans 224 residues: UPF0758 protein CBUD_1789 (224 aa).

Residues 102–224 (QLGCTQDAQQ…SFSFAESGLL (123 aa)) enclose the MPN domain. Histidine 173, histidine 175, and aspartate 186 together coordinate Zn(2+). The JAMM motif signature appears at 173-186 (HNHPSGVPDPSQAD).

The protein belongs to the UPF0758 family.

The polypeptide is UPF0758 protein CBUD_1789 (Coxiella burnetii (strain Dugway 5J108-111)).